The chain runs to 974 residues: MMLGEHLMSWSKTGIIAYSDSQSSNANICLTFLESINGINWRFHTPQKYVLHPQLHEVQYQESSSTLSTHSTTTSVNGSTTAGVGSTPNFGGNSNKSPPQFFYNISSIHWNNWFSLPGDMLAVCDELGNMTMLITGQRPDRATTYEKLTMVFQDNVYKIYNHVMPLKPVDKLKPMNIERKQTRKEYNTSILEFRWLTSSKSVIVSQFCAFDSSSNTYRSRAQQVPPYGVYHPPFIKYACLAIRKNGQIDFWYQFSNSKDHKKITLQLLDTSNQRFKDLQWLEFARITPMNDDQCMLITTYSKLSKNISFYKLHVNWNLNATKPNVLNDPSLKIQFILSTTLDPTDDEGHVLKLENLHVVSKSSIEKDPSPEILVLYNVCDTSKSLVKRYRLAPTQLSAEYLVILKPDLNIDRNNSTNQIFQSRRYNLRRHSDIVLDKKVTLITSEMFDAFVSFYFEDGTIESYNQNDWKLETERLISQSQLGKFKNIIASPLSAGFNYGKLPLPPSVEWMKVSPSMCGVIVKQYNKKWPQFYAAVQKNYADPEKDSINATALAFGYVKSLHKQISAEDLTIAAKTHILRISFLDRKRAKEFITTLLKSLYSFFNISPDAPKEIMDKIITSRPLQKIMLLQLELGSCFSQENIEEMARVILYLKNVLFAFNGVARNFHFAIEQISNNSNQQQNPKLFQTIFSKQDLIHSLIPVAKWFVKFITYLTQEILILINDPTNKEYTLVHGIFGAKMSRTLILSILNEIKKVTQIVAKFPETSYPILNESSTFLKLVLSESPVDFEKFETFLVDVNNKFIALCEQQPSQEREFSLLVKAEIPPEYAKVGDFLLQYANNAVISHANAAAVYFADTSGLKISNSEFFNPEIFHLLQPLEEGLIIDTDKLPIKNRTSKSFSKLLYDDVTCDKLSVSEISDGKLKRCSRCGSVTRAGNIISSDKTIVPTSIQTKRWPTMYTRLCICSGMLFEMDG.

The disordered stretch occupies residues 62-92 (ESSSTLSTHSTTTSVNGSTTAGVGSTPNFGG). Low complexity predominate over residues 63–75 (SSSTLSTHSTTTS). Residues 76-92 (VNGSTTAGVGSTPNFGG) show a composition bias toward polar residues. A Nuclear localization signal motif is present at residues 889–893 (KLPIK).

Belongs to the Mediator complex subunit 16 family. In terms of assembly, component of the Mediator complex, which is composed of at least 21 subunits that form three structurally distinct submodules. The Mediator head module contains MED6, MED8, MED11, SRB4/MED17, SRB5/MED18, ROX3/MED19, SRB2/MED20 and SRB6/MED22, the middle module contains MED1, MED4, NUT1/MED5, MED7, CSE2/MED9, NUT2/MED10, SRB7/MED21 and SOH1/MED31, and the tail module contains MED2, PGD1/MED3, RGR1/MED14, GAL11/MED15 and SIN4/MED16. The head and the middle modules interact directly with RNA polymerase II, whereas the elongated tail module interacts with gene-specific regulatory proteins. Interacts with HOG1. Post-translationally, phosphorylated by KIN28.

It localises to the nucleus. Functionally, component of the Mediator complex, a coactivator involved in the regulated transcription of nearly all RNA polymerase II-dependent genes. Mediator functions as a bridge to convey information from gene-specific regulatory proteins to the basal RNA polymerase II transcription machinery. The Mediator complex, having a compact conformation in its free form, is recruited to promoters by direct interactions with regulatory proteins and serves for the assembly of a functional preinitiation complex with RNA polymerase II and the general transcription factors. The Mediator complex unfolds to an extended conformation and partially surrounds RNA polymerase II, specifically interacting with the unphosphorylated form of the C-terminal domain (CTD) of RNA polymerase II. The Mediator complex dissociates from the RNA polymerase II holoenzyme and stays at the promoter when transcriptional elongation begins. This chain is Mediator of RNA polymerase II transcription subunit 16 (SIN4), found in Saccharomyces cerevisiae (strain ATCC 204508 / S288c) (Baker's yeast).